We begin with the raw amino-acid sequence, 388 residues long: Lipid-A-disaccharide synthase (388 aa).

Belongs to the LpxB family.

The enzyme catalyses a lipid X + a UDP-2-N,3-O-bis[(3R)-3-hydroxyacyl]-alpha-D-glucosamine = a lipid A disaccharide + UDP + H(+). The protein operates within bacterial outer membrane biogenesis; LPS lipid A biosynthesis. Its function is as follows. Condensation of UDP-2,3-diacylglucosamine and 2,3-diacylglucosamine-1-phosphate to form lipid A disaccharide, a precursor of lipid A, a phosphorylated glycolipid that anchors the lipopolysaccharide to the outer membrane of the cell. The sequence is that of Lipid-A-disaccharide synthase from Burkholderia pseudomallei (strain K96243).